Here is a 435-residue protein sequence, read N- to C-terminus: Serine hydroxymethyltransferase (435 aa).

Residues Leu131 and 135–137 each bind (6S)-5,6,7,8-tetrahydrofolate; that span reads GHL. Lys240 carries the post-translational modification N6-(pyridoxal phosphate)lysine.

It belongs to the SHMT family. In terms of assembly, homodimer. Pyridoxal 5'-phosphate is required as a cofactor.

It is found in the cytoplasm. The catalysed reaction is (6R)-5,10-methylene-5,6,7,8-tetrahydrofolate + glycine + H2O = (6S)-5,6,7,8-tetrahydrofolate + L-serine. It functions in the pathway one-carbon metabolism; tetrahydrofolate interconversion. It participates in amino-acid biosynthesis; glycine biosynthesis; glycine from L-serine: step 1/1. Its function is as follows. Catalyzes the reversible interconversion of serine and glycine with tetrahydrofolate (THF) serving as the one-carbon carrier. This reaction serves as the major source of one-carbon groups required for the biosynthesis of purines, thymidylate, methionine, and other important biomolecules. Also exhibits THF-independent aldolase activity toward beta-hydroxyamino acids, producing glycine and aldehydes, via a retro-aldol mechanism. This chain is Serine hydroxymethyltransferase, found in Bifidobacterium longum subsp. infantis (strain ATCC 15697 / DSM 20088 / JCM 1222 / NCTC 11817 / S12).